Consider the following 746-residue polypeptide: Ferrienterobactin receptor (746 aa).

A signal peptide spans 1 to 22; that stretch reads MNKKIHSLALLVNLGIYGVAQA. Residues 34-41 carry the TonB box motif; the sequence is DTIVVTAA. In terms of domain architecture, TBDR plug spans 42–169; the sequence is EQNLQAPGVS…AGGVVNIITK (128 aa). The tract at residues 76-96 is disordered; that stretch reads GVNLTGNSTSGQRGNNRQIDI. The span at 79–93 shows a compositional bias: polar residues; it reads LTGNSTSGQRGNNRQ. Positions 174–746 constitute a TBDR beta-barrel domain; sequence EWHGSWDAYF…TWYMSVNTHF (573 aa). A TonB C-terminal box motif is present at residues 729–746; the sequence is YTYNEPGRTWYMSVNTHF.

It belongs to the TonB-dependent receptor family.

It localises to the cell outer membrane. This protein is involved in the initial step of iron uptake by binding ferrienterobactin (Fe-ENT), an iron chelatin siderophore that allows E.coli to extract iron from the environment. FepA also acts as a receptor for colicins B and D. This Escherichia coli (strain K12) protein is Ferrienterobactin receptor (fepA).